Here is a 321-residue protein sequence, read N- to C-terminus: Thylakoid-associated protein sll1697 (321 aa).

It is found in the cellular thylakoid membrane. The polypeptide is Thylakoid-associated protein sll1697 (Synechocystis sp. (strain ATCC 27184 / PCC 6803 / Kazusa)).